A 238-amino-acid polypeptide reads, in one-letter code: tRNA (guanine-N(7)-)-methyltransferase (238 aa).

The S-adenosyl-L-methionine site is built by Glu-68, Glu-93, Asp-120, and Asp-143. Residue Asp-143 is part of the active site. Substrate-binding positions include Lys-147, Asp-179, and 216-219; that span reads TKFE.

Belongs to the class I-like SAM-binding methyltransferase superfamily. TrmB family.

It carries out the reaction guanosine(46) in tRNA + S-adenosyl-L-methionine = N(7)-methylguanosine(46) in tRNA + S-adenosyl-L-homocysteine. It participates in tRNA modification; N(7)-methylguanine-tRNA biosynthesis. Functionally, catalyzes the formation of N(7)-methylguanine at position 46 (m7G46) in tRNA. This Stutzerimonas stutzeri (strain A1501) (Pseudomonas stutzeri) protein is tRNA (guanine-N(7)-)-methyltransferase.